The chain runs to 704 residues: MAKITKTFQYGKHTVTLETGEIARQAGGAVIVKFDDTVLLVTAVAAKSAREGQDFFPLTVDYQEKFYAGGRIPGGFFKREGRATEKETLISRLIDRPIRPLFPEDYKNEVQIIATVMSMNPDIDGDIAALIGASAALSLAGTPFNGPIAAAKVGYKNGEYILNPTVTDLKDSQLELVVAGTANAVLMVESEAELLSEEVMLGAVTFGHREMQKVINIINELAVEAGTKPSDWVAPAKNDGMIAALKEAVGDQLASAFQVRDKLQRRDAISAIKKDVLGALAPRATIEGWAAGDLAKEFGELEYQTMRGSVLSTKVRIDGRALDTVRPISAKAGVLPRTHGSALFTRGETQAIVITTLGTARDGQVIDAVSGEYKENFLFHYNFPPYSVGECGRFGAPKRREIGHGRLAKRGVLAVMPSLEEFPYTIRVVSEITESNGSSSMASVCGSSLALMDAGVPIKAPVAGIAMGLVKEGNDFVVLSDILGDEDHLGDMDFKVAGTAEGVSALQMDIKIEGITEEIMKQALQQAKAGRLHILGEMAHALTTPRQELSDYAPRLLTIKIHPDKIREVIGKGGSTIQAITKETGTQIDIQDDGTIIIASVNAIAAQAAKSRIEQITSDVEPGRIYEGKVAKIMDFGAFVTILPGKDGLVHVSQISSERVEKVGDKLKEGDLVRVKVLEVDKQGRIRLSIKAVEEGEGVPASAE.

Mg(2+)-binding residues include aspartate 487 and aspartate 493. Residues 554–613 form the KH domain; that stretch reads PRLLTIKIHPDKIREVIGKGGSTIQAITKETGTQIDIQDDGTIIIASVNAIAAQAAKSRI. The S1 motif domain maps to 623 to 691; the sequence is GRIYEGKVAK…KQGRIRLSIK (69 aa).

It belongs to the polyribonucleotide nucleotidyltransferase family. In terms of assembly, component of the RNA degradosome, which is a multiprotein complex involved in RNA processing and mRNA degradation. Mg(2+) serves as cofactor.

Its subcellular location is the cytoplasm. It catalyses the reaction RNA(n+1) + phosphate = RNA(n) + a ribonucleoside 5'-diphosphate. Its function is as follows. Involved in mRNA degradation. Catalyzes the phosphorolysis of single-stranded polyribonucleotides processively in the 3'- to 5'-direction. In Xanthomonas oryzae pv. oryzae (strain MAFF 311018), this protein is Polyribonucleotide nucleotidyltransferase.